The primary structure comprises 315 residues: Nucleotide-binding protein PsycPRwf_2129 (315 aa).

Position 29–36 (29–36) interacts with ATP; sequence GRSGSGKT. GTP is bound at residue 79 to 82; that stretch reads DIRT.

The protein belongs to the RapZ-like family.

Functionally, displays ATPase and GTPase activities. This chain is Nucleotide-binding protein PsycPRwf_2129, found in Psychrobacter sp. (strain PRwf-1).